A 1005-amino-acid polypeptide reads, in one-letter code: Beta-galactosidase (1005 aa).

The active-site Proton donor is the Glu455. Glu526 serves as the catalytic Nucleophile.

Belongs to the glycosyl hydrolase 2 family.

The enzyme catalyses Hydrolysis of terminal non-reducing beta-D-galactose residues in beta-D-galactosides.. This chain is Beta-galactosidase (lacZ), found in Actinobacillus pleuropneumoniae (Haemophilus pleuropneumoniae).